Consider the following 578-residue polypeptide: Lipoprotein A (578 aa).

Positions 1 to 27 (MNKKYFKKYSWVLILSTSILAPMTLAS) are cleaved as a signal peptide. C28 carries the N-palmitoyl cysteine lipid modification. The S-diacylglycerol cysteine moiety is linked to residue C28. Disordered stretches follow at residues 35–135 (KEDK…NTSA) and 172–203 (AKDD…EVKD). The span at 41–50 (NDSSNLSNKT) shows a compositional bias: polar residues. Residues 51-74 (NKSDPNDHLKDKDKNVSQDNKDST) are compositionally biased toward basic and acidic residues. The span at 75–96 (NKAVSNENSQTQSQKTNESSQN) shows a compositional bias: polar residues. Residues 108 to 119 (ITNQNSSSNTKS) are compositionally biased toward low complexity. Over residues 172–181 (AKDDSKEKSK) the composition is skewed to basic and acidic residues.

Belongs to the M.pulmonis LipAB lipoprotein family.

The protein resides in the cell membrane. This Mycoplasmopsis pulmonis (strain UAB CTIP) (Mycoplasma pulmonis) protein is Lipoprotein A (lipA).